A 364-amino-acid polypeptide reads, in one-letter code: Fructose-1,6-bisphosphatase class 1 2 (364 aa).

Residues Glu101, Asp123, Leu125, and Asp126 each contribute to the Mg(2+) site. Substrate-binding positions include Asp126–Ser129 and Asn218. A Mg(2+)-binding site is contributed by Glu290.

Belongs to the FBPase class 1 family. As to quaternary structure, homotetramer. Mg(2+) is required as a cofactor.

It is found in the cytoplasm. It catalyses the reaction beta-D-fructose 1,6-bisphosphate + H2O = beta-D-fructose 6-phosphate + phosphate. It functions in the pathway carbohydrate biosynthesis; gluconeogenesis. The polypeptide is Fructose-1,6-bisphosphatase class 1 2 (Cupriavidus necator (strain ATCC 17699 / DSM 428 / KCTC 22496 / NCIMB 10442 / H16 / Stanier 337) (Ralstonia eutropha)).